A 327-amino-acid polypeptide reads, in one-letter code: Annexin A8 (327 aa).

Annexin repeat units follow at residues 21–92 (FNPV…ALMY), 93–164 (PPYR…CLLQ), 177–249 (GLAL…TIVK), and 253–324 (NLHC…SLVG). Positions 266, 268, 270, and 310 each coordinate Ca(2+).

It belongs to the annexin family.

Its function is as follows. This protein is an anticoagulant protein that acts as an indirect inhibitor of the thromboplastin-specific complex, which is involved in the blood coagulation cascade. In Oryctolagus cuniculus (Rabbit), this protein is Annexin A8 (ANXA8).